Here is a 658-residue protein sequence, read N- to C-terminus: Carnitine O-palmitoyltransferase 2, mitochondrial (658 aa).

A mitochondrion-targeting transit peptide spans 1 to 25 (MMPRLLLRDWPRCPSLVLGAPSRPL). The Mitochondrial matrix portion of the chain corresponds to 26–178 (SAVSGPAEYL…GLLEPEVFHL (153 aa)). Position 69 is an N6-succinyllysine (lysine 69). Lysine 79 is subject to N6-acetyllysine. Residue lysine 85 is modified to N6-succinyllysine. The note=Mitochondrial inner membrane intramembrane region spans 179-208 (NPARSDTDAFKRLIRFVPSSLSWYGAYLVN). The Mitochondrial matrix portion of the chain corresponds to 209 to 658 (AYPLDMSQYF…DALEGKAIKT (450 aa)). At lysine 239 the chain carries N6-acetyllysine; alternate. Lysine 239 carries the post-translational modification N6-succinyllysine; alternate. Lysine 305 carries the post-translational modification N6-acetyllysine. The active-site Proton acceptor is the histidine 372. At lysine 418 the chain carries N6-acetyllysine; alternate. Lysine 418 is subject to N6-succinyllysine; alternate. Lysine 424 and lysine 439 each carry N6-succinyllysine. 452–464 (GKEFLKKKKLSPD) is a binding site for CoA. (R)-carnitine is bound by residues tyrosine 486, serine 488, and threonine 499. An N6-acetyllysine; alternate mark is found at lysine 510 and lysine 544. N6-succinyllysine; alternate is present on residues lysine 510 and lysine 544.

Belongs to the carnitine/choline acetyltransferase family.

It localises to the mitochondrion inner membrane. It catalyses the reaction (R)-carnitine + hexadecanoyl-CoA = O-hexadecanoyl-(R)-carnitine + CoA. It carries out the reaction octanoyl-CoA + (R)-carnitine = O-octanoyl-(R)-carnitine + CoA. The enzyme catalyses decanoyl-CoA + (R)-carnitine = O-decanoyl-(R)-carnitine + CoA. The catalysed reaction is dodecanoyl-CoA + (R)-carnitine = O-dodecanoyl-R-carnitine + CoA. It catalyses the reaction tetradecanoyl-CoA + (R)-carnitine = O-tetradecanoyl-(R)-carnitine + CoA. It carries out the reaction (R)-carnitine + octadecanoyl-CoA = O-octadecanoyl-(R)-carnitine + CoA. The enzyme catalyses eicosanoyl-CoA + (R)-carnitine = O-eicosanoyl-(R)-carnitine + CoA. The catalysed reaction is (9Z)-tetradecenoyl-CoA + (R)-carnitine = O-(9Z)-tetradecenoyl-(R)-carnitine + CoA. It catalyses the reaction (5Z)-tetradecenoyl-CoA + (R)-carnitine = O-(5Z)-tetradecenoyl-(R)-carnitine + CoA. It carries out the reaction (R)-carnitine + (9Z)-octadecenoyl-CoA = O-(9Z)-octadecenoyl-(R)-carnitine + CoA. The enzyme catalyses 4,8-dimethylnonanoyl-CoA + (R)-carnitine = O-4,8-dimethylnonanoyl-(R)-carnitine + CoA. The protein operates within lipid metabolism; fatty acid beta-oxidation. In terms of biological role, involved in the intramitochondrial synthesis of acylcarnitines from accumulated acyl-CoA metabolites. Reconverts acylcarnitines back into the respective acyl-CoA esters that can then undergo beta-oxidation, an essential step for the mitochondrial uptake of long-chain fatty acids and their subsequent beta-oxidation in the mitochondrion. Active with medium (C8-C12) and long-chain (C14-C18) acyl-CoA esters. In Mus musculus (Mouse), this protein is Carnitine O-palmitoyltransferase 2, mitochondrial.